The sequence spans 570 residues: Sulfite reductase [NADPH] hemoprotein beta-component (570 aa).

[4Fe-4S] cluster is bound by residues Cys434, Cys440, Cys479, and Cys483. Cys483 lines the siroheme pocket.

Belongs to the nitrite and sulfite reductase 4Fe-4S domain family. As to quaternary structure, alpha(8)-beta(8). The alpha component is a flavoprotein, the beta component is a hemoprotein. Requires siroheme as cofactor. [4Fe-4S] cluster serves as cofactor.

The catalysed reaction is hydrogen sulfide + 3 NADP(+) + 3 H2O = sulfite + 3 NADPH + 4 H(+). It participates in sulfur metabolism; hydrogen sulfide biosynthesis; hydrogen sulfide from sulfite (NADPH route): step 1/1. Functionally, component of the sulfite reductase complex that catalyzes the 6-electron reduction of sulfite to sulfide. This is one of several activities required for the biosynthesis of L-cysteine from sulfate. This chain is Sulfite reductase [NADPH] hemoprotein beta-component, found in Shigella dysenteriae serotype 1 (strain Sd197).